The primary structure comprises 225 residues: Ribonuclease T (225 aa).

The disordered stretch occupies residues 1–21; sequence MSEDHFDEEHEGHGGGGGSRH. Residues 33 to 207 enclose the Exonuclease domain; sequence VVVDVETGGF…YDTEKTAELF (175 aa). Mg(2+)-binding residues include D36, E38, H194, and D199. The active-site Proton donor/acceptor is the H194.

This sequence belongs to the RNase T family. As to quaternary structure, homodimer. Mg(2+) is required as a cofactor.

Trims short 3' overhangs of a variety of RNA species, leaving a one or two nucleotide 3' overhang. Responsible for the end-turnover of tRNA: specifically removes the terminal AMP residue from uncharged tRNA (tRNA-C-C-A). Also appears to be involved in tRNA biosynthesis. The protein is Ribonuclease T of Pseudomonas syringae pv. tomato (strain ATCC BAA-871 / DC3000).